The primary structure comprises 331 residues: Biotin synthase (331 aa).

In terms of domain architecture, Radical SAM core spans 52 to 277 (PDVEVEGIIS…RTMLRFAGGR (226 aa)). [4Fe-4S] cluster contacts are provided by C67, C71, and C74. [2Fe-2S] cluster contacts are provided by C110, C143, C202, and R272.

The protein belongs to the radical SAM superfamily. Biotin synthase family. In terms of assembly, homodimer. [4Fe-4S] cluster serves as cofactor. It depends on [2Fe-2S] cluster as a cofactor.

The catalysed reaction is (4R,5S)-dethiobiotin + (sulfur carrier)-SH + 2 reduced [2Fe-2S]-[ferredoxin] + 2 S-adenosyl-L-methionine = (sulfur carrier)-H + biotin + 2 5'-deoxyadenosine + 2 L-methionine + 2 oxidized [2Fe-2S]-[ferredoxin]. Its pathway is cofactor biosynthesis; biotin biosynthesis; biotin from 7,8-diaminononanoate: step 2/2. Its function is as follows. Catalyzes the conversion of dethiobiotin (DTB) to biotin by the insertion of a sulfur atom into dethiobiotin via a radical-based mechanism. The protein is Biotin synthase of Mycolicibacterium vanbaalenii (strain DSM 7251 / JCM 13017 / BCRC 16820 / KCTC 9966 / NRRL B-24157 / PYR-1) (Mycobacterium vanbaalenii).